The sequence spans 210 residues: Small ribosomal subunit protein eS8y (210 aa).

The disordered stretch occupies residues 1–22; it reads MGISRDSIHKRRATGGKQKMWR. The span at 8 to 22 shows a compositional bias: basic residues; that stretch reads IHKRRATGGKQKMWR.

It belongs to the eukaryotic ribosomal protein eS8 family.

This chain is Small ribosomal subunit protein eS8y (RPS8B), found in Arabidopsis thaliana (Mouse-ear cress).